The sequence spans 446 residues: Glucosylglycerate hydrolase (446 aa).

Substrate-binding positions include Tyr-36, Trp-40–Asp-43, Tyr-88, Gln-115, and Gly-180. The active-site Proton donor is Asp-182. Substrate-binding positions include Arg-216 and Tyr-375 to Trp-376. Glu-419 functions as the Proton acceptor in the catalytic mechanism. Substrate is bound at residue Gln-434.

It belongs to the glycosyl hydrolase 63 family. In terms of assembly, homotetramer. Dimer of dimers.

The catalysed reaction is (2R)-2-O-(alpha-D-glucopyranosyl)-glycerate + H2O = (R)-glycerate + D-glucose. With respect to regulation, activity is not dependent on divalent cations, but it is enhanced by Mg(2+). Functionally, catalyzes the hydrolysis of glucosylglycerate (GG) to glycerate and glucose. Involved in recovery from nitrogen starvation by promoting the rapid mobilization of the glucosylglycerate that accumulates under these conditions. Can also hydrolyze mannosylglycerate (MG), with tenfold lower efficiency. The sequence is that of Glucosylglycerate hydrolase from Mycolicibacterium hassiacum (strain DSM 44199 / CIP 105218 / JCM 12690 / 3849) (Mycobacterium hassiacum).